The following is an 89-amino-acid chain: Large ribosomal subunit protein bL28 (89 aa).

This sequence belongs to the bacterial ribosomal protein bL28 family.

The protein is Large ribosomal subunit protein bL28 of Chlamydia caviae (strain ATCC VR-813 / DSM 19441 / 03DC25 / GPIC) (Chlamydophila caviae).